The sequence spans 181 residues: Secreted chorismate mutase (181 aa).

The first 20 residues, 1–20, serve as a signal peptide directing secretion; the sequence is MLASVALAALAGVGTPHATA. A Chorismate mutase domain is found at 21–100; that stretch reads DDASPLVPLV…ATSSVEHTRF (80 aa). Substrate is bound by residues R36, K47, D56, 59-63, 92-96, and R121; these read REQQV and TSSVE. C147 and C180 are oxidised to a cystine.

In terms of assembly, homodimer.

The protein resides in the secreted. It catalyses the reaction chorismate = prephenate. Its pathway is metabolic intermediate biosynthesis; prephenate biosynthesis; prephenate from chorismate: step 1/1. Its function is as follows. Catalyzes the Claisen rearrangement of chorismate to prephenate. May play some role in the pathogenicity. The sequence is that of Secreted chorismate mutase from Mycolicibacterium smegmatis (strain ATCC 700084 / mc(2)155) (Mycobacterium smegmatis).